Here is a 942-residue protein sequence, read N- to C-terminus: VPS35 endosomal protein sorting factor-like (942 aa).

Belongs to the VPS35L family. As to quaternary structure, component of the heterotrimeric retriever complex.

The protein resides in the endosome. Functionally, acts as a component of the retriever complex. The retriever complex is a heterotrimeric complex related to retromer cargo-selective complex (CSC) and essential for retromer-independent retrieval and recycling of numerous cargos. This Drosophila melanogaster (Fruit fly) protein is VPS35 endosomal protein sorting factor-like.